Consider the following 394-residue polypeptide: Elongation factor Tu (394 aa).

The region spanning 10-204 (KPHVNVGTIG…ALDSYIPEPE (195 aa)) is the tr-type G domain. Residues 19–26 (GHVDHGKT) form a G1 region. 19–26 (GHVDHGKT) is a binding site for GTP. Threonine 26 is a Mg(2+) binding site. Residues 60–64 (GITIA) are G2. The G3 stretch occupies residues 81–84 (DCPG). Residues 81-85 (DCPGH) and 136-139 (NKCD) each bind GTP. The G4 stretch occupies residues 136–139 (NKCD). Residues 174-176 (SAL) are G5.

The protein belongs to the TRAFAC class translation factor GTPase superfamily. Classic translation factor GTPase family. EF-Tu/EF-1A subfamily. As to quaternary structure, monomer.

It localises to the cytoplasm. It catalyses the reaction GTP + H2O = GDP + phosphate + H(+). Functionally, GTP hydrolase that promotes the GTP-dependent binding of aminoacyl-tRNA to the A-site of ribosomes during protein biosynthesis. The chain is Elongation factor Tu from Vibrio campbellii (strain ATCC BAA-1116).